Here is a 223-residue protein sequence, read N- to C-terminus: Uracil-DNA glycosylase (223 aa).

Asp-67 (proton acceptor) is an active-site residue.

The protein belongs to the uracil-DNA glycosylase (UDG) superfamily. UNG family.

It localises to the cytoplasm. It carries out the reaction Hydrolyzes single-stranded DNA or mismatched double-stranded DNA and polynucleotides, releasing free uracil.. In terms of biological role, excises uracil residues from the DNA which can arise as a result of misincorporation of dUMP residues by DNA polymerase or due to deamination of cytosine. This Borreliella burgdorferi (strain ZS7) (Borrelia burgdorferi) protein is Uracil-DNA glycosylase.